The chain runs to 364 residues: Phospho-N-acetylmuramoyl-pentapeptide-transferase (364 aa).

10 helical membrane passes run 3-23, 51-71, 80-100, 116-136, 154-174, 185-205, 229-249, 256-276, 281-301, and 341-361; these read AILF…RVAI, TMGG…AKLI, ALLL…DDFI, MIGL…SWLE, IGWI…IIAA, LDGL…FVNI, PLDL…FLWW, IFMG…LAIL, LLLI…MLQV, and FWII…AEWV.

The protein belongs to the glycosyltransferase 4 family. MraY subfamily. Mg(2+) serves as cofactor.

The protein resides in the cell membrane. The enzyme catalyses UDP-N-acetyl-alpha-D-muramoyl-L-alanyl-gamma-D-glutamyl-meso-2,6-diaminopimeloyl-D-alanyl-D-alanine + di-trans,octa-cis-undecaprenyl phosphate = di-trans,octa-cis-undecaprenyl diphospho-N-acetyl-alpha-D-muramoyl-L-alanyl-D-glutamyl-meso-2,6-diaminopimeloyl-D-alanyl-D-alanine + UMP. It participates in cell wall biogenesis; peptidoglycan biosynthesis. Functionally, catalyzes the initial step of the lipid cycle reactions in the biosynthesis of the cell wall peptidoglycan: transfers peptidoglycan precursor phospho-MurNAc-pentapeptide from UDP-MurNAc-pentapeptide onto the lipid carrier undecaprenyl phosphate, yielding undecaprenyl-pyrophosphoryl-MurNAc-pentapeptide, known as lipid I. The chain is Phospho-N-acetylmuramoyl-pentapeptide-transferase from Nocardioides sp. (strain ATCC BAA-499 / JS614).